The following is a 492-amino-acid chain: MDFWLYKQAQQNGHHIAITDGQESYTYQNLYCEASLLAKRLKAYQQSRVGLYIDNSIQSIILIHACWLANIEIAMINTRLTPNEMKNQMRSIDVQLIFCTLPLELRGFQIVSLDDIEFAGTDITMNGLLDNTMDIQYDTSNETVVPKESPSNILNTSFNLDDIASIMFTSGTTGPQKAVPQTFRNHYASAIGCKESLGFDRDTNWLSVLPIYHISGLSVLLRAVIEGFTVRIVDKFNAEQILTIIKNERITHISLVPQTLNWLMQQGLHEPYNLQKILLGGAKLSATLIETALQYNLPIYNSFGMTETCSQFLTATPEMLHARPDTVGMPSANVDVKIKNPNKEGHGELMIKGANVMNGYLYPTDLTGTFENGYFNTGDIAEIDHEGYVMIYDRRKDLIISGGENIYPYQIETVAKQFPGISDAVCVGHPDDTWGQVPKLYFVSESDISKAQLIAYLSQHLAKYKVPKHFEKVDTLPYTSTGKLQRNKLYRG.

It belongs to the ATP-dependent AMP-binding enzyme family. MenE subfamily.

It catalyses the reaction 2-succinylbenzoate + ATP + CoA = 2-succinylbenzoyl-CoA + AMP + diphosphate. It participates in quinol/quinone metabolism; 1,4-dihydroxy-2-naphthoate biosynthesis; 1,4-dihydroxy-2-naphthoate from chorismate: step 5/7. The protein operates within quinol/quinone metabolism; menaquinone biosynthesis. Converts 2-succinylbenzoate (OSB) to 2-succinylbenzoyl-CoA (OSB-CoA). The polypeptide is 2-succinylbenzoate--CoA ligase (Staphylococcus aureus (strain MSSA476)).